A 391-amino-acid chain; its full sequence is Chaperone protein DnaJ (391 aa).

One can recognise a J domain in the interval 6–70 (DYYEILEVSR…EKRKLYDTYG (65 aa)). The segment at 145–226 (GCIKNVKYTR…CKSRRMVDEV (82 aa)) adopts a CR-type zinc-finger fold. C158, C161, C174, C177, C200, C203, C214, and C217 together coordinate Zn(2+). CXXCXGXG motif repeat units follow at residues 158-165 (CPDCNGSG), 174-181 (CSDCNGEG), 200-207 (CPSCKGEG), and 214-221 (CKKCKSRR).

Belongs to the DnaJ family. Homodimer. The cofactor is Zn(2+).

It is found in the cytoplasm. In terms of biological role, participates actively in the response to hyperosmotic and heat shock by preventing the aggregation of stress-denatured proteins and by disaggregating proteins, also in an autonomous, DnaK-independent fashion. Unfolded proteins bind initially to DnaJ; upon interaction with the DnaJ-bound protein, DnaK hydrolyzes its bound ATP, resulting in the formation of a stable complex. GrpE releases ADP from DnaK; ATP binding to DnaK triggers the release of the substrate protein, thus completing the reaction cycle. Several rounds of ATP-dependent interactions between DnaJ, DnaK and GrpE are required for fully efficient folding. Also involved, together with DnaK and GrpE, in the DNA replication of plasmids through activation of initiation proteins. The chain is Chaperone protein DnaJ from Mycoplasmoides gallisepticum (strain R(low / passage 15 / clone 2)) (Mycoplasma gallisepticum).